The sequence spans 150 residues: Protein SprT-like (150 aa).

Residues 6-147 form the SprT-like domain; that stretch reads LQKLTEDISE…CGKCRGKIKR (142 aa). His67 provides a ligand contact to Zn(2+). Residue Glu68 is part of the active site. Residue His71 coordinates Zn(2+).

This sequence belongs to the SprT family. The cofactor is Zn(2+).

Its subcellular location is the cytoplasm. The protein is Protein SprT-like (ydcK) of Bacillus subtilis (strain 168).